A 555-amino-acid polypeptide reads, in one-letter code: Glutamine--tRNA ligase (555 aa).

The short motif at Pro-35–His-45 is the 'HIGH' region element. Residues Glu-36–Asn-38 and His-42–Ser-48 contribute to the ATP site. L-glutamine-binding residues include Asp-68 and Tyr-213. ATP contacts are provided by residues Thr-232 and Arg-262 to Leu-263. The 'KMSKS' region signature appears at Ile-269–Arg-273.

This sequence belongs to the class-I aminoacyl-tRNA synthetase family. Monomer.

The protein resides in the cytoplasm. The enzyme catalyses tRNA(Gln) + L-glutamine + ATP = L-glutaminyl-tRNA(Gln) + AMP + diphosphate. This Ectopseudomonas mendocina (strain ymp) (Pseudomonas mendocina) protein is Glutamine--tRNA ligase.